Here is a 281-residue protein sequence, read N- to C-terminus: Small ribosomal subunit protein uS2 (281 aa).

Positions 225 to 281 are disordered; the sequence is LMERKAEKPEEEETEEAAPRRERRARSGARRSRQNENEATAEAATEVAEAPEAEEAE. The span at 245–256 shows a compositional bias: basic residues; the sequence is RERRARSGARRS. Low complexity predominate over residues 262-272; sequence EATAEAATEVA.

It belongs to the universal ribosomal protein uS2 family.

The polypeptide is Small ribosomal subunit protein uS2 (Porphyromonas gingivalis (strain ATCC 33277 / DSM 20709 / CIP 103683 / JCM 12257 / NCTC 11834 / 2561)).